The primary structure comprises 139 residues: Prostate-associated microseminoprotein (139 aa).

Positions 1 to 35 are cleaved as a signal peptide; that stretch reads MALRMLWAGQAKGILGGWRTICLVVSLFLQHPGVS. Disulfide bonds link Cys38/Cys78, Cys46/Cys69, Cys64/Cys100, Cys67/Cys77, and Cys91/Cys114. The interval 116–139 is disordered; that stretch reads GGGPDLEWGSANTPAPGASAPHSS.

The protein belongs to the beta-microseminoprotein family.

The protein localises to the secreted. In terms of biological role, acts as a ligand for C-C chemokine receptor CCR2. Signals through binding and activation of CCR2 and induces a strong chemotactic response and mobilization of intracellular calcium ions. Exhibits a chemotactic activity for monocytes and lymphocytes but not neutrophils. In Mus musculus (Mouse), this protein is Prostate-associated microseminoprotein (Msmp).